The sequence spans 894 residues: MTTNNPFDKVKDVLKSQDQTYNFYNLSKLQDPRIEKLPYSIRILLESAVRNCDNFEVHEKDVENILNWENTANKVEIPFKPARVLLQDFTGVPAVVDLAAMRDAMKRLGGDPAKINPLVPVDLVIDHSVQVDVSRTVDALEQNQKIEFHRNHERFSFLKWGAQAFDGLFIAPPGSGIVHQVNLEYIAREVMNGTGNLLYPDSVVGTDSHTTMINGLGVCGWGVGGIEAEAVMLGQPMSMVLPEVVGYKFVGKLPDIATATDLVLTVTNELRKKGVVGKFVEFYGEGVSTLSVQDRATISNMAPEYGATMGFFPADENTIDYLASTGRSNTKIEYIKNYLSSQGLMCNYKSQSHPIFTTTMELDLSTVVPSLSGPKRPHDRISLNSMKQDFNSCLSSPVGFKGFGLTADQIQKKATFTFKDKQYTIGHGAVTIAAITSCTNTSNPSVMLGAGLLAKNAVEHGLEVAPYIKTSLSPGSGVVTEYFSHSGLQEPLNKLGFDLTGYGCMTCIGNSGELAEPLAEAITKEDLVVAGVLSGNRNFEGRIHPLLRANYLASPPLVVAYALAGTVDIDFETTPLGVSKKTGQPVFLRDIWPSKDLIQQTIKSSVLPDMYERVYSNVNDGNKSWNELKVPTGLLYPWDEKSTYIHNPPFFKTMELTVSKRPAITNAYCLLNLGDSITTDHISPAGNINRKSSAARYLESKGVKPEDFNTYGSRRGNDEIMVRGTFANTRIVNKLAPAVGPQTTYVPTGELMFISDAAEKYQSEGHQLIVLAGSDYGSGSSRDWAAKGPYLQGIKCVIAISFERIHRSNLVGMGIIPLQFQPGQNASTLGLTGKEQFNIELPTDKSLIKTGQTVKVTTNCGKSFETILRFDTPIEVEYWANNGILSYVLRKLLH.

Residues Gln87 and 207–209 (DSH) contribute to the substrate site. Residues Cys438, Cys504, and Cys507 each contribute to the [4Fe-4S] cluster site. Substrate contacts are provided by residues Arg537, Arg542, and 781 to 782 (SR).

The protein belongs to the aconitase/IPM isomerase family. It depends on [4Fe-4S] cluster as a cofactor.

It localises to the cytoplasm. The protein localises to the cytosol. It catalyses the reaction citrate = D-threo-isocitrate. Functionally, catalyzes the isomerization of citrate to isocitrate via cis-aconitate. The protein is Probable cytoplasmic aconitate hydratase (aco1) of Dictyostelium discoideum (Social amoeba).